The primary structure comprises 267 residues: 1-(5-phosphoribosyl)-5-[(5-phosphoribosylamino)methylideneamino] imidazole-4-carboxamide isomerase (267 aa).

The protein belongs to the HisA/HisF family.

The protein resides in the cytoplasm. The enzyme catalyses 1-(5-phospho-beta-D-ribosyl)-5-[(5-phospho-beta-D-ribosylamino)methylideneamino]imidazole-4-carboxamide = 5-[(5-phospho-1-deoxy-D-ribulos-1-ylimino)methylamino]-1-(5-phospho-beta-D-ribosyl)imidazole-4-carboxamide. Its pathway is amino-acid biosynthesis; L-histidine biosynthesis; L-histidine from 5-phospho-alpha-D-ribose 1-diphosphate: step 4/9. The protein is 1-(5-phosphoribosyl)-5-[(5-phosphoribosylamino)methylideneamino] imidazole-4-carboxamide isomerase (HIS6) of Kluyveromyces lactis (strain ATCC 8585 / CBS 2359 / DSM 70799 / NBRC 1267 / NRRL Y-1140 / WM37) (Yeast).